Reading from the N-terminus, the 60-residue chain is Photosystem II reaction center protein L (60 aa).

Residues 39–59 (SLYWGLLLIFVLAVLFSSYIF) traverse the membrane as a helical segment.

The protein belongs to the PsbL family. In terms of assembly, PSII is composed of 1 copy each of membrane proteins PsbA, PsbB, PsbC, PsbD, PsbE, PsbF, PsbH, PsbI, PsbJ, PsbK, PsbL, PsbM, PsbT, PsbX, PsbY, PsbZ, Psb30/Ycf12, at least 3 peripheral proteins of the oxygen-evolving complex and a large number of cofactors. It forms dimeric complexes.

It is found in the plastid. The protein localises to the chloroplast thylakoid membrane. Its function is as follows. One of the components of the core complex of photosystem II (PSII). PSII is a light-driven water:plastoquinone oxidoreductase that uses light energy to abstract electrons from H(2)O, generating O(2) and a proton gradient subsequently used for ATP formation. It consists of a core antenna complex that captures photons, and an electron transfer chain that converts photonic excitation into a charge separation. This subunit is found at the monomer-monomer interface and is required for correct PSII assembly and/or dimerization. The protein is Photosystem II reaction center protein L of Oedogonium cardiacum (Filamentous green alga).